The sequence spans 255 residues: Small ribosomal subunit protein uS2 (255 aa).

A disordered region spans residues 232 to 255 (ASGRDLGASEEVPVEPALEEASEA).

Belongs to the universal ribosomal protein uS2 family.

This is Small ribosomal subunit protein uS2 from Rhizobium meliloti (strain 1021) (Ensifer meliloti).